The sequence spans 388 residues: UDP-N-acetylglucosamine--N-acetylmuramyl-(pentapeptide) pyrophosphoryl-undecaprenol N-acetylglucosamine transferase (388 aa).

UDP-N-acetyl-alpha-D-glucosamine-binding positions include Thr-42–Gly-44, Asn-159, Arg-195, Ser-223, Ile-277, and Gln-322.

This sequence belongs to the glycosyltransferase 28 family. MurG subfamily.

The protein localises to the cell inner membrane. The catalysed reaction is di-trans,octa-cis-undecaprenyl diphospho-N-acetyl-alpha-D-muramoyl-L-alanyl-D-glutamyl-meso-2,6-diaminopimeloyl-D-alanyl-D-alanine + UDP-N-acetyl-alpha-D-glucosamine = di-trans,octa-cis-undecaprenyl diphospho-[N-acetyl-alpha-D-glucosaminyl-(1-&gt;4)]-N-acetyl-alpha-D-muramoyl-L-alanyl-D-glutamyl-meso-2,6-diaminopimeloyl-D-alanyl-D-alanine + UDP + H(+). Its pathway is cell wall biogenesis; peptidoglycan biosynthesis. Its function is as follows. Cell wall formation. Catalyzes the transfer of a GlcNAc subunit on undecaprenyl-pyrophosphoryl-MurNAc-pentapeptide (lipid intermediate I) to form undecaprenyl-pyrophosphoryl-MurNAc-(pentapeptide)GlcNAc (lipid intermediate II). The protein is UDP-N-acetylglucosamine--N-acetylmuramyl-(pentapeptide) pyrophosphoryl-undecaprenol N-acetylglucosamine transferase of Albidiferax ferrireducens (strain ATCC BAA-621 / DSM 15236 / T118) (Rhodoferax ferrireducens).